The following is a 222-amino-acid chain: Countin-3 (222 aa).

The signal sequence occupies residues 1–20 (MNKILSLFLITILLISKVMS). The 85-residue stretch at 21-105 (SSEECKLCTD…ESVKMCQYND (85 aa)) folds into the Saposin B-type domain. Disulfide bonds link cysteine 25–cysteine 101, cysteine 28–cysteine 95, and cysteine 56–cysteine 68. Residues asparagine 108, asparagine 134, and asparagine 218 are each glycosylated (N-linked (GlcNAc...) asparagine).

It belongs to the countin family.

The protein localises to the secreted. Its function is as follows. May control the size of the multicellular structure. The polypeptide is Countin-3 (ctnC) (Dictyostelium discoideum (Social amoeba)).